A 557-amino-acid chain; its full sequence is Leucine-rich glioma-inactivated protein 1 (557 aa).

Positions Met1–Gly34 are cleaved as a signal peptide. In terms of domain architecture, LRRNT spans Lys35–Leu72. LRR repeat units follow at residues Ser92–Gly113, His116–Gly137, and Ser140–Gly161. Positions Asn173–Ile223 constitute an LRRCT domain. An N-linked (GlcNAc...) asparagine glycan is attached at Asn192. EAR repeat units follow at residues Glu225–His267, Thr271–Ser313, Lys317–Gly364, Gly366–Lys415, Leu419–Gly462, Ser464–Ala506, and Lys510–Ile552. A glycan (N-linked (GlcNAc...) asparagine) is linked at Asn277. Residue Asn422 is glycosylated (N-linked (GlcNAc...) asparagine).

Oligomer. Interacts with KCNA1 within a complex containing KCNA1, KCNA4 and KCNAB1. Part of a complex containing ADAM22, DLG4/PSD95 and CACNG2/Stargazin. Can bind to ADAM11 and ADAM23. Glycosylated. In terms of tissue distribution, predominantly expressed in neural tissues, especially in brain. Expression is reduced in low-grade brain tumors and significantly reduced or absent in malignant gliomas. Expressed in the occipital cortex and hippocampus; higher amounts are observed in the parietal and frontal cortices, putamen, and, particularly, in the temporal neocortex, where it is between 3 and 5 times more abundant than in the hippocampus (at protein level). Expression is absent in the cerebellum. As to expression, abundantly expressed in the occipital cortex and weakly expressed in the hippocampus (at protein level).

It is found in the secreted. Its subcellular location is the synapse. The protein resides in the cytoplasm. It localises to the golgi apparatus. The protein localises to the endoplasmic reticulum. Its function is as follows. Regulates voltage-gated potassium channels assembled from KCNA1, KCNA4 and KCNAB1. It slows down channel inactivation by precluding channel closure mediated by the KCNAB1 subunit. Ligand for ADAM22 that positively regulates synaptic transmission mediated by AMPA-type glutamate receptors. Plays a role in suppressing the production of MMP1/3 through the phosphatidylinositol 3-kinase/ERK pathway. May play a role in the control of neuroblastoma cell survival. This Homo sapiens (Human) protein is Leucine-rich glioma-inactivated protein 1 (LGI1).